The sequence spans 171 residues: Co-chaperone protein HscB homolog (171 aa).

In terms of domain architecture, J spans 2-74 (NHFELFGLPL…ISRAEYLLVQ (73 aa)).

Belongs to the HscB family. In terms of assembly, interacts with HscA and stimulates its ATPase activity.

Co-chaperone involved in the maturation of iron-sulfur cluster-containing proteins. Seems to help targeting proteins to be folded toward HscA. The chain is Co-chaperone protein HscB homolog from Vibrio atlanticus (strain LGP32) (Vibrio splendidus (strain Mel32)).